A 335-amino-acid polypeptide reads, in one-letter code: Fructose-1,6-bisphosphatase class 1 (335 aa).

The Mg(2+) site is built by glutamate 92, aspartate 114, leucine 116, and aspartate 117. Substrate contacts are provided by residues aspartate 117 to serine 120, asparagine 209, and lysine 275. Residue glutamate 281 coordinates Mg(2+).

Belongs to the FBPase class 1 family. Homotetramer. It depends on Mg(2+) as a cofactor.

It localises to the cytoplasm. The catalysed reaction is beta-D-fructose 1,6-bisphosphate + H2O = beta-D-fructose 6-phosphate + phosphate. It participates in carbohydrate biosynthesis; gluconeogenesis. This chain is Fructose-1,6-bisphosphatase class 1, found in Polaromonas sp. (strain JS666 / ATCC BAA-500).